We begin with the raw amino-acid sequence, 185 residues long: Ribosome-recycling factor (185 aa).

The protein belongs to the RRF family.

The protein resides in the cytoplasm. Responsible for the release of ribosomes from messenger RNA at the termination of protein biosynthesis. May increase the efficiency of translation by recycling ribosomes from one round of translation to another. This is Ribosome-recycling factor from Helicobacter pylori (strain Shi470).